Here is a 240-residue protein sequence, read N- to C-terminus: Methylthioribulose-1-phosphate dehydratase (240 aa).

Cys103 contacts substrate. The Zn(2+) site is built by His121 and His123. Residue Glu144 is the Proton donor/acceptor of the active site. Zn(2+) is bound at residue His200.

This sequence belongs to the aldolase class II family. MtnB subfamily. Requires Zn(2+) as cofactor.

The protein resides in the cytoplasm. The catalysed reaction is 5-(methylsulfanyl)-D-ribulose 1-phosphate = 5-methylsulfanyl-2,3-dioxopentyl phosphate + H2O. It participates in amino-acid biosynthesis; L-methionine biosynthesis via salvage pathway; L-methionine from S-methyl-5-thio-alpha-D-ribose 1-phosphate: step 2/6. Functionally, catalyzes the dehydration of methylthioribulose-1-phosphate (MTRu-1-P) into 2,3-diketo-5-methylthiopentyl-1-phosphate (DK-MTP-1-P). The polypeptide is Methylthioribulose-1-phosphate dehydratase (Komagataella phaffii (strain GS115 / ATCC 20864) (Yeast)).